The chain runs to 502 residues: Probable cytochrome P450 6a23 (502 aa).

Heme is bound at residue cysteine 445.

Belongs to the cytochrome P450 family. Requires heme as cofactor.

It is found in the endoplasmic reticulum membrane. It localises to the microsome membrane. Functionally, may be involved in the metabolism of insect hormones and in the breakdown of synthetic insecticides. The sequence is that of Probable cytochrome P450 6a23 (Cyp6a23) from Drosophila melanogaster (Fruit fly).